A 408-amino-acid polypeptide reads, in one-letter code: Imidazolonepropionase (408 aa).

Positions 73 and 75 each coordinate Fe(3+). Residues H73 and H75 each coordinate Zn(2+). The 4-imidazolone-5-propanoate site is built by R82, Y145, and H178. Y145 serves as a coordination point for N-formimidoyl-L-glutamate. H243 is a Fe(3+) binding site. Residue H243 participates in Zn(2+) binding. Q246 lines the 4-imidazolone-5-propanoate pocket. D318 is a binding site for Fe(3+). D318 contacts Zn(2+). N-formimidoyl-L-glutamate contacts are provided by N320 and G322. S323 is a 4-imidazolone-5-propanoate binding site.

Belongs to the metallo-dependent hydrolases superfamily. HutI family. Requires Zn(2+) as cofactor. It depends on Fe(3+) as a cofactor.

It is found in the cytoplasm. The enzyme catalyses 4-imidazolone-5-propanoate + H2O = N-formimidoyl-L-glutamate. It participates in amino-acid degradation; L-histidine degradation into L-glutamate; N-formimidoyl-L-glutamate from L-histidine: step 3/3. Catalyzes the hydrolytic cleavage of the carbon-nitrogen bond in imidazolone-5-propanoate to yield N-formimidoyl-L-glutamate. It is the third step in the universal histidine degradation pathway. In Shewanella sp. (strain ANA-3), this protein is Imidazolonepropionase.